We begin with the raw amino-acid sequence, 496 residues long: NADP-dependent glyceraldehyde-3-phosphate dehydrogenase (496 aa).

Substrate-binding positions include R116 and 169–170; that span reads NY. NADP(+) is bound by residues K192, T195, and D230. 245-249 serves as a coordination point for NAD(+); the sequence is GGDTG. Residue E264 is the Proton acceptor of the active site. Position 297–299 (297–299) interacts with substrate; the sequence is RCT. Catalysis depends on C298, which acts as the Nucleophile. E391 serves as a coordination point for NADP(+). R451 is a substrate binding site.

It belongs to the aldehyde dehydrogenase family.

It is found in the cytoplasm. The enzyme catalyses D-glyceraldehyde 3-phosphate + NADP(+) + H2O = (2R)-3-phosphoglycerate + NADPH + 2 H(+). In terms of biological role, important as a means of generating NADPH for biosynthetic reactions. This Pisum sativum (Garden pea) protein is NADP-dependent glyceraldehyde-3-phosphate dehydrogenase (GAPN).